We begin with the raw amino-acid sequence, 912 residues long: Nonsense-mediated mRNA decay factor SMG8 (912 aa).

A disordered region spans residues 565–630; the sequence is EHSNRTPDAS…GEDEDETLEQ (66 aa). The segment covering 570–602 has biased composition (polar residues); sequence TPDASTHPPMTNENSPHLSGSQKSQDSASNLTF. A compositionally biased stretch (basic and acidic residues) spans 604-614; sequence MDEKRDEENKS.

It belongs to the SMG8 family.

In terms of biological role, involved in nonsense-mediated decay (NMD) of mRNAs containing premature stop codons. Probable component of kinase complex containing SMG1 and recruited to stalled ribosomes. The sequence is that of Nonsense-mediated mRNA decay factor SMG8 from Culex quinquefasciatus (Southern house mosquito).